We begin with the raw amino-acid sequence, 547 residues long: Solute carrier family 22 member 25 (547 aa).

Over 1–9 (MAFQDLLDQ) the chain is Cytoplasmic. A helical membrane pass occupies residues 10–30 (VGGLGRFQILQMVFLIMFNVI). Topologically, residues 31–145 (VYHQTQLENF…DLVCESQPLN (115 aa)) are extracellular. Residues Asn56 and Asn102 are each glycosylated (N-linked (GlcNAc...) asparagine). A helical membrane pass occupies residues 146-166 (SVAKFLFMAGMMVGGNLYGHL). Topologically, residues 167-177 (SDRFGRKFVLR) are cytoplasmic. A helical membrane pass occupies residues 178–198 (WSYLQLAIVGTCAAFAPTILV). The Extracellular segment spans residues 199-204 (YCSLRF). Residues 205-225 (LAGAATFSIIVNTVLLIVEWI) form a helical membrane-spanning segment. Residues 226–234 (THQFCAMAL) lie on the Cytoplasmic side of the membrane. A helical membrane pass occupies residues 235-255 (TLTLCAASIGHITLGSLAFVI). At 256–259 (RDQC) the chain is on the extracellular side. Residues 260–280 (ILQLVMSAPCFVFFLFSRWLA) form a helical membrane-spanning segment. The Cytoplasmic segment spans residues 281-349 (ESARWLIINN…LLRIPNICKR (69 aa)). The helical transmembrane segment at 350-370 (ICFLSFVRFASTIPFWGLTLH) threads the bilayer. At 371–377 (LQHLGNN) the chain is on the extracellular side. Residues 378–398 (VFLLQTLFGAVTLLANCVAPW) form a helical membrane-spanning segment. Residues 399-406 (ALNHMSRR) are Cytoplasmic-facing. A helical membrane pass occupies residues 407–427 (LSQMLLMFLLATCLLAIIFVP). At 428 to 434 (QEMQTLR) the chain is on the extracellular side. A helical transmembrane segment spans residues 435-455 (VVLATLGVGAASLGITCSTAQ). Residues 456–470 (ENELIPSIIRGRATG) lie on the Cytoplasmic side of the membrane. Residues 471–491 (ITGNFANIGGALASLMMILSI) traverse the membrane as a helical segment. Residues 492-494 (YSR) are Extracellular-facing. A helical membrane pass occupies residues 495 to 515 (PLPWIIYGVFAILSGLVVLLL). The Cytoplasmic segment spans residues 516-547 (PETRNQPLLDSIQDVENEGVNSLAAPQRSSVL).

The protein belongs to the major facilitator (TC 2.A.1) superfamily. Organic cation transporter (TC 2.A.1.19) family. In terms of tissue distribution, expressed exclusively in liver in both embryo and adult.

Its subcellular location is the membrane. The chain is Solute carrier family 22 member 25 from Homo sapiens (Human).